The following is a 195-amino-acid chain: MSLYSKAVNAIVKAVQGNGEELRGIIPNSLCEEIKEEYERRKYTTFIKALDKDGYSSNTDEKIKSLISALEEIEYEIPDDISNVSEIAGEIMYIIEEKDVEFELLSDLIEARGDFSHCRYIRKTCIRYASQSSFCDRMCREYDEDSDDEDDFYDGWPDDGRCFNEDKYDLMDKLEGKYHGVYDLFMLVNELHSDW.

This is an uncharacterized protein from Magallana gigas (Pacific oyster).